Consider the following 445-residue polypeptide: Exodeoxyribonuclease 7 large subunit (445 aa).

This sequence belongs to the XseA family. In terms of assembly, heterooligomer composed of large and small subunits.

The protein localises to the cytoplasm. It carries out the reaction Exonucleolytic cleavage in either 5'- to 3'- or 3'- to 5'-direction to yield nucleoside 5'-phosphates.. In terms of biological role, bidirectionally degrades single-stranded DNA into large acid-insoluble oligonucleotides, which are then degraded further into small acid-soluble oligonucleotides. In Xanthomonas oryzae pv. oryzae (strain MAFF 311018), this protein is Exodeoxyribonuclease 7 large subunit.